The chain runs to 693 residues: Polyribonucleotide nucleotidyltransferase (693 aa).

Residues Asp486 and Asp492 each contribute to the Mg(2+) site. Residues 553-612 enclose the KH domain; it reads PRFTTLKIHPDKIRDVIGKGGATIRALTEETGTSIDISDDGTVKIASVDKAAGDEARRRI. Positions 622–690 constitute an S1 motif domain; it reads GRIYEGRVVK…KQGRIRLSMK (69 aa).

The protein belongs to the polyribonucleotide nucleotidyltransferase family. As to quaternary structure, component of the RNA degradosome, which is a multiprotein complex involved in RNA processing and mRNA degradation. It depends on Mg(2+) as a cofactor.

It localises to the cytoplasm. It carries out the reaction RNA(n+1) + phosphate = RNA(n) + a ribonucleoside 5'-diphosphate. In terms of biological role, involved in mRNA degradation. Catalyzes the phosphorolysis of single-stranded polyribonucleotides processively in the 3'- to 5'-direction. The protein is Polyribonucleotide nucleotidyltransferase of Thioalkalivibrio sulfidiphilus (strain HL-EbGR7).